A 165-amino-acid polypeptide reads, in one-letter code: Small ribosomal subunit protein uS17c (165 aa).

Residues 1–57 (MSLSFSLLKPPLSSSNPNPFLHGTTTKLSLLPSFSALSLSSSPPSSSTTYTFPVIKA) constitute a chloroplast transit peptide. The interval 128-165 (AVAPEGRQSSATRPKPIQAASDELGIPLESQVEGDKTV) is disordered.

In terms of assembly, component of the chloroplast small ribosomal subunit (SSU). Mature 70S chloroplast ribosomes of higher plants consist of a small (30S) and a large (50S) subunit. The 30S small subunit contains 1 molecule of ribosomal RNA (16S rRNA) and 24 different proteins. The 50S large subunit contains 3 rRNA molecules (23S, 5S and 4.5S rRNA) and 33 different proteins.

The protein resides in the plastid. It localises to the chloroplast. Functionally, component of the chloroplast ribosome (chloro-ribosome), a dedicated translation machinery responsible for the synthesis of chloroplast genome-encoded proteins, including proteins of the transcription and translation machinery and components of the photosynthetic apparatus. This chain is Small ribosomal subunit protein uS17c (RPS17), found in Spinacia oleracea (Spinach).